Here is a 258-residue protein sequence, read N- to C-terminus: Isoprenyl transferase 2 (258 aa).

D39 is an active-site residue. Residue D39 participates in Mg(2+) binding. Residues 40–43, W44, R52, H57, and 85–87 each bind substrate; these read GNRR and SND. N88 (proton acceptor) is an active-site residue. Substrate contacts are provided by residues R92, R207, and 213–215; that span reads RLS. Residue E226 coordinates Mg(2+).

It belongs to the UPP synthase family. In terms of assembly, homodimer. Requires Mg(2+) as cofactor.

Catalyzes the condensation of isopentenyl diphosphate (IPP) with allylic pyrophosphates generating different type of terpenoids. The chain is Isoprenyl transferase 2 from Tropheryma whipplei (strain Twist) (Whipple's bacillus).